The primary structure comprises 225 residues: Insulin-induced gene 2 protein (225 aa).

The Cytoplasmic portion of the chain corresponds to 1–28 (MAEGETKSPGPKKCGPYISSVTSQSVNL). A helical transmembrane segment spans residues 29-51 (MIRGVVLFFIGVFLALVLNLLQI). The Lumenal segment spans residues 52 to 70 (QRNVTLFPPDVIASIFSSA). A helical membrane pass occupies residues 71-88 (WWVPPCCGTASAVIGLLY). Over 89 to 103 (PCIDRHLGEPHKFKR) the chain is Cytoplasmic. Residues 104-126 (EWSSVMRCVAVFVGINHASAKVD) form a helical membrane-spanning segment. Over 127-129 (FDN) the chain is Lumenal. Residues 130–148 (NIQLSLTLAALSIGLWWTF) traverse the membrane as a helical segment. Topologically, residues 149-153 (DRSRS) are cytoplasmic. A Phosphoserine modification is found at S151. A helical transmembrane segment spans residues 154-175 (GFGLGVGIAFLATLVTQLLVYN). Residues 176-189 (GVYQYTSPDFLYVR) lie on the Lumenal side of the membrane. Residues 190–207 (SWLPCIFFAGGITMGNIG) form a helical membrane-spanning segment. The Cytoplasmic segment spans residues 208 to 225 (RQLAMYECKVIAEKSHQE). The residue at position 215 (C215) is a Cysteine sulfenic acid (-SOH); alternate. A Glycyl cysteine thioester (Cys-Gly) (interchain with G-Cter in ubiquitin); alternate cross-link involves residue C215. Positions 219 to 225 (AEKSHQE) match the KxHxx motif.

Belongs to the INSIG family. As to quaternary structure, interacts with SCAP; interaction is direct and only takes place in the presence of sterols; it prevents interaction between SCAP and the coat protein complex II (COPII). Associates with the SCAP-SREBP complex (composed of SCAP and SREBF1/SREBP1 or SREBF2/SREBP2); association is mediated via its interaction with SCAP and only takes place in the presence of sterols. Interacts with RNF139. Interacts with RNF145. In terms of processing, phosphorylation at Ser-151 by PCK1 reduces binding to oxysterol, disrupting the interaction between INSIG2 and SCAP, thereby promoting nuclear translocation of SREBP proteins (SREBF1/SREBP1 or SREBF2/SREBP2) and subsequent transcription of downstream lipogenesis-related genes. Post-translationally, polyubiquitinated by AMFR/gp78 at Cys-215 in some tissues such as adipose tissues, undifferentiated myoblasts and liver, leading to its degradation. In differentiated myotubes, Cys-215 oxidation prevents ubiquitination at the same site, resulting in protein stabilization. Oxidized at Cys-215 in differentiated myotubes, preventing ubiquitination at the same site, and resulting in protein stabilization.

The protein localises to the endoplasmic reticulum membrane. Its function is as follows. Oxysterol-binding protein that mediates feedback control of cholesterol synthesis by controlling both endoplasmic reticulum to Golgi transport of SCAP and degradation of HMGCR. Acts as a negative regulator of cholesterol biosynthesis by mediating the retention of the SCAP-SREBP complex in the endoplasmic reticulum, thereby blocking the processing of sterol regulatory element-binding proteins (SREBPs) SREBF1/SREBP1 and SREBF2/SREBP2. Binds oxysterol, including 22-hydroxycholesterol, 24-hydroxycholesterol, 25-hydroxycholesterol and 27-hydroxycholesterol, regulating interaction with SCAP and retention of the SCAP-SREBP complex in the endoplasmic reticulum. In presence of oxysterol, interacts with SCAP, retaining the SCAP-SREBP complex in the endoplasmic reticulum, thereby preventing SCAP from escorting SREBF1/SREBP1 and SREBF2/SREBP2 to the Golgi. Sterol deprivation or phosphorylation by PCK1 reduce oxysterol-binding, disrupting the interaction between INSIG2 and SCAP, thereby promoting Golgi transport of the SCAP-SREBP complex, followed by processing and nuclear translocation of SREBF1/SREBP1 and SREBF2/SREBP2. Also regulates cholesterol synthesis by regulating degradation of HMGCR: initiates the sterol-mediated ubiquitin-mediated endoplasmic reticulum-associated degradation (ERAD) of HMGCR via recruitment of the reductase to the ubiquitin ligase RNF139. This Sus scrofa (Pig) protein is Insulin-induced gene 2 protein.